The sequence spans 394 residues: Phosphopentomutase (394 aa).

6 residues coordinate Mn(2+): Asp13, Asp286, His291, Asp327, His328, and His339.

This sequence belongs to the phosphopentomutase family. Requires Mn(2+) as cofactor.

Its subcellular location is the cytoplasm. It carries out the reaction 2-deoxy-alpha-D-ribose 1-phosphate = 2-deoxy-D-ribose 5-phosphate. The catalysed reaction is alpha-D-ribose 1-phosphate = D-ribose 5-phosphate. It functions in the pathway carbohydrate degradation; 2-deoxy-D-ribose 1-phosphate degradation; D-glyceraldehyde 3-phosphate and acetaldehyde from 2-deoxy-alpha-D-ribose 1-phosphate: step 1/2. Isomerase that catalyzes the conversion of deoxy-ribose 1-phosphate (dRib-1-P) and ribose 1-phosphate (Rib-1-P) to deoxy-ribose 5-phosphate (dRib-5-P) and ribose 5-phosphate (Rib-5-P), respectively. This is Phosphopentomutase from Bacillus cereus (strain G9842).